Here is a 290-residue protein sequence, read N- to C-terminus: Forkhead box protein O3B (290 aa).

2 disordered regions span residues 1 to 30 (METD…TEEG) and 44 to 239 (AAAA…SSRR). Low complexity-rich tracts occupy residues 44–59 (AAAA…RGVH) and 75–91 (RTPA…EAPA). Residue Thr-117 is modified to Phosphothreonine; by PKB/AKT1. The segment covering 142-153 (IPEEEDDEDDED) has biased composition (acidic residues). Residues 242 to 290 (WGNLSYADLITRAIESSPDRRLTLSQIYEWMVSCVPYFKDKGNSNSSAG) constitute a DNA-binding region (fork-head).

The protein resides in the cytoplasm. Its subcellular location is the cytosol. In terms of biological role, transcription factor. The protein is Forkhead box protein O3B of Homo sapiens (Human).